We begin with the raw amino-acid sequence, 242 residues long: Uridylate kinase (242 aa).

Residues 15–18, glycine 58, and arginine 62 each bind ATP; that span reads KISG. Residues aspartate 77 and 139–146 each bind UMP; that span reads TGNPFFTT. ATP-binding residues include threonine 166, tyrosine 172, and aspartate 175.

This sequence belongs to the UMP kinase family. In terms of assembly, homohexamer.

It is found in the cytoplasm. It catalyses the reaction UMP + ATP = UDP + ADP. The protein operates within pyrimidine metabolism; CTP biosynthesis via de novo pathway; UDP from UMP (UMPK route): step 1/1. Its activity is regulated as follows. Inhibited by UTP. In terms of biological role, catalyzes the reversible phosphorylation of UMP to UDP. This Buchnera aphidicola subsp. Acyrthosiphon pisum (strain APS) (Acyrthosiphon pisum symbiotic bacterium) protein is Uridylate kinase.